We begin with the raw amino-acid sequence, 319 residues long: Phosphate acyltransferase (319 aa).

This sequence belongs to the PlsX family. In terms of assembly, homodimer. Probably interacts with PlsY.

It is found in the cytoplasm. The enzyme catalyses a fatty acyl-[ACP] + phosphate = an acyl phosphate + holo-[ACP]. It participates in lipid metabolism; phospholipid metabolism. Functionally, catalyzes the reversible formation of acyl-phosphate (acyl-PO(4)) from acyl-[acyl-carrier-protein] (acyl-ACP). This enzyme utilizes acyl-ACP as fatty acyl donor, but not acyl-CoA. In Chlamydia muridarum (strain MoPn / Nigg), this protein is Phosphate acyltransferase.